The following is a 284-amino-acid chain: 4-diphosphocytidyl-2-C-methyl-D-erythritol kinase (284 aa).

Residue lysine 14 is part of the active site. Residue 98 to 108 (PMGGGLGGGSS) coordinates ATP. The active site involves aspartate 140.

It belongs to the GHMP kinase family. IspE subfamily.

It carries out the reaction 4-CDP-2-C-methyl-D-erythritol + ATP = 4-CDP-2-C-methyl-D-erythritol 2-phosphate + ADP + H(+). The protein operates within isoprenoid biosynthesis; isopentenyl diphosphate biosynthesis via DXP pathway; isopentenyl diphosphate from 1-deoxy-D-xylulose 5-phosphate: step 3/6. Catalyzes the phosphorylation of the position 2 hydroxy group of 4-diphosphocytidyl-2C-methyl-D-erythritol. The chain is 4-diphosphocytidyl-2-C-methyl-D-erythritol kinase from Shewanella pealeana (strain ATCC 700345 / ANG-SQ1).